The following is a 303-amino-acid chain: MLKQRTLKNPIRATGVGLHTGKPIQLTLLPAPADFGIVFRRVDLNPPVEIPANPYNVGETTLSTCLIKGDVRVSTVEHLMSAMAGLGVDNAVIELDSAEIPIMDGSAGPFVFLIQSAGVLEQDAPKKFLRVKKEVTLRDGDKYASFTPFDGFKVNFSIEFDHPVFRDRRPQTEVEFSTASFVKEVSRARTFGFMHEIEYLRSKGLAQGGSMANAIVVGEYRILNEDGLRFEDEFVKHKILDAIGDLYMLGHGLLADFRAHKSGHSLNNRALRLLLEQKDAWEWVTFEDEQPVPIDYLRPLAVA.

Positions 78, 237, and 241 each coordinate Zn(2+). The active-site Proton donor is the His-264.

The protein belongs to the LpxC family. The cofactor is Zn(2+).

The catalysed reaction is a UDP-3-O-[(3R)-3-hydroxyacyl]-N-acetyl-alpha-D-glucosamine + H2O = a UDP-3-O-[(3R)-3-hydroxyacyl]-alpha-D-glucosamine + acetate. Its pathway is glycolipid biosynthesis; lipid IV(A) biosynthesis; lipid IV(A) from (3R)-3-hydroxytetradecanoyl-[acyl-carrier-protein] and UDP-N-acetyl-alpha-D-glucosamine: step 2/6. Functionally, catalyzes the hydrolysis of UDP-3-O-myristoyl-N-acetylglucosamine to form UDP-3-O-myristoylglucosamine and acetate, the committed step in lipid A biosynthesis. This is UDP-3-O-acyl-N-acetylglucosamine deacetylase from Cellvibrio japonicus (strain Ueda107) (Pseudomonas fluorescens subsp. cellulosa).